The chain runs to 1590 residues: von Willebrand factor D and EGF domain-containing protein (1590 aa).

Positions M1 to A20 are cleaved as a signal peptide. The N-linked (GlcNAc...) asparagine glycan is linked to N367. Residues A423–M606 enclose the VWFD domain. 2 cysteine pairs are disulfide-bonded: C425-C565 and C468-C477. N703 and N968 each carry an N-linked (GlcNAc...) asparagine glycan. The EGF-like 1 domain occupies T1177 to E1216. Cystine bridges form between C1181–C1189, C1183–C1204, and C1206–C1215. Positions D1268–A1280 are enriched in basic and acidic residues. Positions D1268–K1288 are disordered. 6 EGF-like domains span residues A1294 to Q1326, D1358 to E1390, S1422 to Q1454, N1455 to Q1486, N1518 to Q1550, and I1551 to E1582. 17 cysteine pairs are disulfide-bonded: C1298-C1308, C1302-C1314, C1316-C1325, C1362-C1372, C1366-C1378, C1380-C1389, C1426-C1436, C1430-C1442, C1444-C1453, C1458-C1468, C1462-C1474, C1522-C1532, C1526-C1538, C1540-C1549, C1554-C1564, C1558-C1570, and C1572-C1581.

Its subcellular location is the secreted. In Homo sapiens (Human), this protein is von Willebrand factor D and EGF domain-containing protein (VWDE).